Here is a 104-residue protein sequence, read N- to C-terminus: MMMRGMNMQSMMKQMQKLQKNMKKDQDELNATVFEGHAADDAVVVKFTGDHKMTDISIKEEAIDPDDVDMLQDLVLMAVNDAMSKIDKQTQETMGKYSRNIPGL.

Low complexity predominate over residues 1 to 19 (MMMRGMNMQSMMKQMQKLQ). Positions 1–24 (MMMRGMNMQSMMKQMQKLQKNMKK) are disordered.

It belongs to the YbaB/EbfC family. Homodimer.

It is found in the cytoplasm. The protein localises to the nucleoid. Binds to DNA and alters its conformation. May be involved in regulation of gene expression, nucleoid organization and DNA protection. The sequence is that of Nucleoid-associated protein LSL_1227 from Ligilactobacillus salivarius (strain UCC118) (Lactobacillus salivarius).